Reading from the N-terminus, the 278-residue chain is Large ribosomal subunit protein uL2 (278 aa).

Residues 201–278 form a disordered region; it reads HGNINDGKAG…IMRSRHQRKK (78 aa). Over residues 210-221 the composition is skewed to basic residues; that stretch reads GRSRWRGKRPHV.

The protein belongs to the universal ribosomal protein uL2 family. In terms of assembly, part of the 50S ribosomal subunit. Forms a bridge to the 30S subunit in the 70S ribosome.

One of the primary rRNA binding proteins. Required for association of the 30S and 50S subunits to form the 70S ribosome, for tRNA binding and peptide bond formation. It has been suggested to have peptidyltransferase activity; this is somewhat controversial. Makes several contacts with the 16S rRNA in the 70S ribosome. The protein is Large ribosomal subunit protein uL2 of Rhizobium meliloti (strain 1021) (Ensifer meliloti).